The sequence spans 536 residues: MSTKYVFVTGGVVSALGKGITAASLGRLLKNRGVKISIQKFDPYLNVDPGTMSPYQHGEVFVTDDGAETDLDLGHYERFIDESLTQNSNVTTGKIYSSVIEKERRGEYLGGTVQVIPHITNAIKDKVYQVAKDRDVDVVITEIGGTVGDIESQPFLESIRQIKSEVGAENVCYIHVTLVPYLGKAGELKTKPTQHSVKELRMIGIQPDIIVCRTEKELSDDVKAKIGLFCNIDGRSVIQNLDAENLYEVPLMLHSEGLDNLVCEKLHLGCKDIDNSEWIQMVQKIKNLKNNVKIALVGKYVELHDAYISVVEALSHGGYANNTNVEIKWINAENIENSNAQELLKDVDGILVPGGFGDRGIEGKIAAIKWARENKKPFLGICLGMQCAVIEYARSVLGYEDANSSEINPGTNYPVIDLMPDQKDIENLGGTMRLGLYPCRLAENTNSYEVYKNEIINERHRHRYEFNNEFRKQITEAGMKIAGTSPDERLVEIVEVEDHPWYVAVQFHPELKSRPNKPHKLFVGFIKAALEENKSK.

The interval 1–268 (MSTKYVFVTG…DNLVCEKLHL (268 aa)) is amidoligase domain. Residue Ser-14 participates in CTP binding. Residue Ser-14 participates in UTP binding. 15-20 (ALGKGI) is an ATP binding site. An L-glutamine-binding site is contributed by Tyr-55. Residue Asp-72 participates in ATP binding. Residues Asp-72 and Glu-142 each contribute to the Mg(2+) site. CTP contacts are provided by residues 149–151 (DIE), 189–194 (KTKPTQ), and Lys-225. UTP is bound by residues 189–194 (KTKPTQ) and Lys-225. Residues 293–535 (KIALVGKYVE…IKAALEENKS (243 aa)) form the Glutamine amidotransferase type-1 domain. Position 355 (Gly-355) interacts with L-glutamine. Cys-382 acts as the Nucleophile; for glutamine hydrolysis in catalysis. Residues 383 to 386 (LGMQ), Glu-406, and Arg-463 contribute to the L-glutamine site. Active-site residues include His-508 and Glu-510.

It belongs to the CTP synthase family. Homotetramer.

The enzyme catalyses UTP + L-glutamine + ATP + H2O = CTP + L-glutamate + ADP + phosphate + 2 H(+). It catalyses the reaction L-glutamine + H2O = L-glutamate + NH4(+). It carries out the reaction UTP + NH4(+) + ATP = CTP + ADP + phosphate + 2 H(+). The protein operates within pyrimidine metabolism; CTP biosynthesis via de novo pathway; CTP from UDP: step 2/2. Allosterically activated by GTP, when glutamine is the substrate; GTP has no effect on the reaction when ammonia is the substrate. The allosteric effector GTP functions by stabilizing the protein conformation that binds the tetrahedral intermediate(s) formed during glutamine hydrolysis. Inhibited by the product CTP, via allosteric rather than competitive inhibition. Catalyzes the ATP-dependent amination of UTP to CTP with either L-glutamine or ammonia as the source of nitrogen. Regulates intracellular CTP levels through interactions with the four ribonucleotide triphosphates. This Clostridium beijerinckii (strain ATCC 51743 / NCIMB 8052) (Clostridium acetobutylicum) protein is CTP synthase.